Consider the following 709-residue polypeptide: Polyribonucleotide nucleotidyltransferase (709 aa).

2 residues coordinate Mg(2+): aspartate 485 and aspartate 491. In terms of domain architecture, KH spans 552-611 (PRIYTMKIDPKKIKDVIGKGGATIRSLTEETGTSIDIDDDGTVKIAAVDSNAAKNVMGRI). The S1 motif domain occupies 621 to 689 (GAIYKGKVTR…RQGRIRLTMK (69 aa)).

Belongs to the polyribonucleotide nucleotidyltransferase family. As to quaternary structure, component of the RNA degradosome, which is a multiprotein complex involved in RNA processing and mRNA degradation. Requires Mg(2+) as cofactor.

It localises to the cytoplasm. It catalyses the reaction RNA(n+1) + phosphate = RNA(n) + a ribonucleoside 5'-diphosphate. Its function is as follows. Involved in mRNA degradation. Catalyzes the phosphorolysis of single-stranded polyribonucleotides processively in the 3'- to 5'-direction. This chain is Polyribonucleotide nucleotidyltransferase, found in Haemophilus influenzae (strain 86-028NP).